Reading from the N-terminus, the 364-residue chain is MPYQYPALTPEQKKELSDIAHRIVAPGKGILAADESTGSIAKRLQSIGTENTEENRRFYRQLLLTADDRVNPCIVGVILFHETLYQKADDGRPFPQVIKSKGGVVGIKVDKGVVPLAGTNGETTTQGLDGLSERCAQYKKDGADFAKWRCVLKIGEHTPSALAIMENANVLARYASICQQNGIVPIAEPEILPDGDHDLKRCQYVTEKVLAAVYKALSDHHIYLEGTLLKPNMVTPGHACTQKFSHEEIAMATVTALRRTVPPAVTGITFLSGGQSEEEASINLNAINKCPLLKPWALTFSYGRALQASALKAWGGKKENLKAAQEEYVKRALANSLACQGKYTPSGQAGAAASESLFVSNHAY.

Tyr-5 bears the Phosphotyrosine mark. Thr-9 carries the post-translational modification Phosphothreonine. 2 positions are modified to phosphoserine: Ser-36 and Ser-39. Position 42 is an N6-acetyllysine; alternate (Lys-42). Residue Lys-42 forms a Glycyl lysine isopeptide (Lys-Gly) (interchain with G-Cter in SUMO1); alternate linkage. Residue Lys-42 forms a Glycyl lysine isopeptide (Lys-Gly) (interchain with G-Cter in SUMO2); alternate linkage. Arg-43 is a binding site for beta-D-fructose 1,6-bisphosphate. Phosphoserine is present on Ser-46. An N6-(2-hydroxyisobutyryl)lysine modification is found at Lys-99. An N6-acetyllysine modification is found at Lys-108. Residue Lys-111 is modified to N6-acetyllysine; alternate. The residue at position 111 (Lys-111) is an N6-malonyllysine; alternate. Ser-132 carries the post-translational modification Phosphoserine. Residue Lys-147 is modified to N6-(2-hydroxyisobutyryl)lysine. Catalysis depends on Glu-188, which acts as the Proton acceptor. Lys-230 (schiff-base intermediate with dihydroxyacetone-P) is an active-site residue. At Ser-272 the chain carries Phosphoserine. Beta-D-fructose 1,6-bisphosphate-binding positions include 272 to 274, Ser-301, and Arg-304; that span reads SGG. Lys-312 is subject to N6-malonyllysine. The residue at position 330 (Lys-330) is an N6-acetyllysine.

This sequence belongs to the class I fructose-bisphosphate aldolase family. As to quaternary structure, homotetramer. Interacts with SNX9 and WAS. Interacts with FBP2; the interaction blocks FBP2 inhibition by physiological concentrations of AMP and reduces inhibition by Ca(2+).

Its subcellular location is the cytoplasm. It is found in the myofibril. The protein resides in the sarcomere. The protein localises to the i band. It localises to the m line. The catalysed reaction is beta-D-fructose 1,6-bisphosphate = D-glyceraldehyde 3-phosphate + dihydroxyacetone phosphate. It functions in the pathway carbohydrate degradation; glycolysis; D-glyceraldehyde 3-phosphate and glycerone phosphate from D-glucose: step 4/4. In terms of biological role, catalyzes the reversible conversion of beta-D-fructose 1,6-bisphosphate (FBP) into two triose phosphate and plays a key role in glycolysis and gluconeogenesis. In addition, may also function as scaffolding protein. This Pan troglodytes (Chimpanzee) protein is Fructose-bisphosphate aldolase A (ALDOA).